A 463-amino-acid polypeptide reads, in one-letter code: Dopaminechrome tautomerase (463 aa).

Belongs to the major royal jelly protein family.

The protein resides in the secreted. It carries out the reaction dopaminechrome = 5,6-dihydroxyindole. It participates in pigment biosynthesis; melanin biosynthesis. Functionally, catalyzes the conversion of dopaminechrome to 5,6-dihydroxyindole in the eumelanin biosynthetic pathway originating from dopamine. Catalyzes tautomerization of dopaminechrome to 5,6-dihydroxyindole during eumelanin biosynthesis. Acts both dopaminechrome and N-methyl dopaminechrome but not on dopachrome or other aminochromes tested. The polypeptide is Dopaminechrome tautomerase (Drosophila melanogaster (Fruit fly)).